The sequence spans 516 residues: Cysteine--tRNA ligase (516 aa).

Cys34 serves as a coordination point for Zn(2+). Positions 36-46 (PTVYNFAHLGN) match the 'HIGH' region motif. Zn(2+) contacts are provided by Cys225, His250, and Glu254. The 'KMSKS' region motif lies at 285 to 289 (KMSKS). Lys288 contacts ATP.

It belongs to the class-I aminoacyl-tRNA synthetase family. Monomer. The cofactor is Zn(2+).

The protein localises to the cytoplasm. The enzyme catalyses tRNA(Cys) + L-cysteine + ATP = L-cysteinyl-tRNA(Cys) + AMP + diphosphate. In Zymomonas mobilis subsp. mobilis (strain ATCC 31821 / ZM4 / CP4), this protein is Cysteine--tRNA ligase.